The chain runs to 409 residues: Arginine deiminase (409 aa).

The active-site Amidino-cysteine intermediate is cysteine 397.

It belongs to the arginine deiminase family.

It localises to the cytoplasm. It catalyses the reaction L-arginine + H2O = L-citrulline + NH4(+). It participates in amino-acid degradation; L-arginine degradation via ADI pathway; carbamoyl phosphate from L-arginine: step 1/2. The polypeptide is Arginine deiminase (arcA) (Metamycoplasma hominis (Mycoplasma hominis)).